Here is a 277-residue protein sequence, read N- to C-terminus: Uracil phosphoribosyltransferase homolog (277 aa).

Residues 1–69 (MEAMPCHNQR…AAAPSPAAED (69 aa)) are disordered. Low complexity predominate over residues 37-69 (AEPSEGSSSGSPSPDSSSGSNGAAAAPSPAAED). GTP-binding positions include R101, R110, and 144-147 (EKGN). R154 serves as a coordination point for 5-phospho-alpha-D-ribose 1-diphosphate. Residues R171 and R200 each contribute to the GTP site. Residue 206 to 214 (YPILSTGNT) participates in 5-phospho-alpha-D-ribose 1-diphosphate binding. Residue 267–269 (THF) participates in uracil binding.

This sequence belongs to the UPRTase family.

It is found in the cytoplasm. The protein localises to the nucleus. The polypeptide is Uracil phosphoribosyltransferase homolog (UPRT) (Gallus gallus (Chicken)).